The primary structure comprises 117 residues: Immunoglobulin heavy variable 1-69 (117 aa).

The N-terminal stretch at methionine 1 to serine 19 is a signal peptide. Glutamine 20 carries the pyrrolidone carboxylic acid modification. The framework-1 stretch occupies residues glutamine 20–serine 44. In terms of domain architecture, Ig-like spans glutamine 20 to arginine 117. Cysteine 41 and cysteine 115 are joined by a disulfide. A complementarity-determining-1 region spans residues glycine 45–alanine 52. The segment at isoleucine 53–glycine 69 is framework-2. Residues isoleucine 70–alanine 77 are complementarity-determining-2. A framework-3 region spans residues asparagine 78 to cysteine 115. Residues alanine 116–arginine 117 form a complementarity-determining-3 region.

In terms of assembly, immunoglobulins are composed of two identical heavy chains and two identical light chains; disulfide-linked.

It localises to the secreted. The protein resides in the cell membrane. Its function is as follows. V region of the variable domain of immunoglobulin heavy chains that participates in the antigen recognition. Immunoglobulins, also known as antibodies, are membrane-bound or secreted glycoproteins produced by B lymphocytes. In the recognition phase of humoral immunity, the membrane-bound immunoglobulins serve as receptors which, upon binding of a specific antigen, trigger the clonal expansion and differentiation of B lymphocytes into immunoglobulins-secreting plasma cells. Secreted immunoglobulins mediate the effector phase of humoral immunity, which results in the elimination of bound antigens. The antigen binding site is formed by the variable domain of one heavy chain, together with that of its associated light chain. Thus, each immunoglobulin has two antigen binding sites with remarkable affinity for a particular antigen. The variable domains are assembled by a process called V-(D)-J rearrangement and can then be subjected to somatic hypermutations which, after exposure to antigen and selection, allow affinity maturation for a particular antigen. The polypeptide is Immunoglobulin heavy variable 1-69 (Homo sapiens (Human)).